Reading from the N-terminus, the 69-residue chain is FXYD domain-containing ion transport regulator 11 (69 aa).

The N-terminal stretch at 1–22 (MSQLTELVLLTVFLALFSRAEA) is a signal peptide. Topologically, residues 23-33 (NPFVYNYEALR) are extracellular. Residues 34–54 (IGGLVFTCVLVAGAVTALCWG) traverse the membrane as a helical segment. At 55–69 (QCKPKRKHDDDASKI) the chain is on the cytoplasmic side.

The protein belongs to the FXYD family. As to expression, detected in adult gill and in larval skin at 2 days post-fertilization (at protein level). In adult gill, strong expression is found in the basal regions of the secondary lamellae.

The protein localises to the cell membrane. Its function is as follows. May modulate the activity of a sodium/potassium-transporting ATPase. The protein is FXYD domain-containing ion transport regulator 11 of Danio rerio (Zebrafish).